The chain runs to 417 residues: Zinc finger CCCH domain-containing protein ZFN-like (417 aa).

C3H1-type zinc fingers lie at residues 31 to 58 and 75 to 103; these read PGEP…HPPN and RLGQ…HPKD. The C3H1-type 3; degenerate zinc-finger motif lies at 121 to 149; it reads RPNESERAYYLRTGQCKFGNTCKFHHPQP. 2 C3H1-type zinc fingers span residues 278–306 and 324–352; these read RPDQ…HPRE and RPGE…HPMG. The interval 383-417 is disordered; that stretch reads SSEGLVESGTAKPRRLSLSETRPIPPGDDNIDDEG.

It localises to the nucleus. The polypeptide is Zinc finger CCCH domain-containing protein ZFN-like (Pisum sativum (Garden pea)).